Here is a 253-residue protein sequence, read N- to C-terminus: Flap endonuclease Xni (253 aa).

Aspartate 105 contacts Mg(2+). A 5'-3' exonuclease domain is found at 162–251 (ERHQLLDYIA…HLKLSDLRVN (90 aa)). Residues leucine 172, proline 181, isoleucine 183, and isoleucine 186 each coordinate K(+). The segment at 185-190 (GIGPKS) is interaction with DNA.

This sequence belongs to the Xni family. It depends on Mg(2+) as a cofactor. K(+) serves as cofactor.

In terms of biological role, has flap endonuclease activity. During DNA replication, flap endonucleases cleave the 5'-overhanging flap structure that is generated by displacement synthesis when DNA polymerase encounters the 5'-end of a downstream Okazaki fragment. The sequence is that of Flap endonuclease Xni from Shewanella amazonensis (strain ATCC BAA-1098 / SB2B).